Consider the following 116-residue polypeptide: MTNRCACFALAFLLFCLLAISSIEAAPMPSQSNGGYGGAGYNELEEVPDDLLMELMTRFGRTIIRARNDLENSKRTVDFGLARGYSGTQEAKHRMGLAAANFAGGPGRRRRSETDV.

An N-terminal signal peptide occupies residues 1–25 (MTNRCACFALAFLLFCLLAISSIEA). Positions 26–75 (APMPSQSNGGYGGAGYNELEEVPDDLLMELMTRFGRTIIRARNDLENSKR) are excised as a propeptide. Residue P106 is modified to Proline amide. Residues 112-116 (SETDV) constitute a propeptide that is removed on maturation.

The protein localises to the secreted. Regulation of fluid secretion. Stimulates Malpighian tubules fluid secretion by activating the apical membrane V-ATPase via cyclic AMP of principal cells in the main secretory segment. The polypeptide is Diuretic hormone class 2 (Dh31) (Drosophila melanogaster (Fruit fly)).